The primary structure comprises 472 residues: UDP-glycosyltransferase 2 (472 aa).

UDP-alpha-D-glucose-binding positions include Ser-283, 348–349, 366–374, and 388–391; these read WA, HCGWNSVLE, and YAEQ.

The protein belongs to the UDP-glycosyltransferase family. As to expression, highly expressed in roots. Expressed in leaves and stems.

In terms of biological role, glycosyltransferase that possesses isoflavonoids 4'-O- and 7-O-glucosyltransferase activities. Shows a successive glucosylation toward the acceptors producing their corresponding 4',7-O-diglucosides. Can use genistein, formononetin, daidzein, liquiritigenin and naringenin as substrates. Also shows a 3'-O-glucosylation activity in vitro. The chain is UDP-glycosyltransferase 2 from Pueraria montana var. lobata (Kudzu vine).